The sequence spans 328 residues: DNA-directed RNA polymerase subunit alpha (328 aa).

An alpha N-terminal domain (alpha-NTD) region spans residues 1–231; it reads MIQQMQMPEK…DHVRLFSLFS (231 aa). The interval 252 to 328 is alpha C-terminal domain (alpha-CTD); that stretch reads MRKLLMTRIE…MEVTKYRLNQ (77 aa).

This sequence belongs to the RNA polymerase alpha chain family. Homodimer. The RNAP catalytic core consists of 2 alpha, 1 beta, 1 beta' and 1 omega subunit. When a sigma factor is associated with the core the holoenzyme is formed, which can initiate transcription.

The enzyme catalyses RNA(n) + a ribonucleoside 5'-triphosphate = RNA(n+1) + diphosphate. Its function is as follows. DNA-dependent RNA polymerase catalyzes the transcription of DNA into RNA using the four ribonucleoside triphosphates as substrates. This Chloroherpeton thalassium (strain ATCC 35110 / GB-78) protein is DNA-directed RNA polymerase subunit alpha.